Reading from the N-terminus, the 473-residue chain is Cannabinoid receptor 1 (473 aa).

Residues 1 to 117 are Extracellular-facing; that stretch reads MKSILDGLAD…CFMILNPSQQ (117 aa). The tract at residues 2-23 is required for mitochondrial localization; that stretch reads KSILDGLADTTFRTITTDLLYV. N-linked (GlcNAc...) asparagine glycans are attached at residues Asn78 and Asn84. The helical transmembrane segment at 118–143 threads the bilayer; the sequence is LAIAVLSLTLGTFTVLENLLVLCVIL. The Cytoplasmic portion of the chain corresponds to 144–155; it reads HSRSLRCRPSYH. The helical transmembrane segment at 156–176 threads the bilayer; the sequence is FIGSLAVADLLGSVIFVYSFV. Topologically, residues 177–188 are extracellular; the sequence is DFHVFHRKDSPN. Residues 189 to 213 form a helical membrane-spanning segment; sequence VFLFKLGGVTASFTASVGSLFLTAI. Over 214-233 the chain is Cytoplasmic; the sequence is DRYISIHRPLAYKRIVTRPK. A helical transmembrane segment spans residues 234-256; it reads AVVAFCLMWTIAIVIAVLPLLGW. Residues 257-274 lie on the Extracellular side of the membrane; it reads NCKKLQSVCSDIFPLIDE. The helical transmembrane segment at 275-300 threads the bilayer; sequence TYLMFWIGVTSVLLLFIVYAYMYILW. Residues 301-345 lie on the Cytoplasmic side of the membrane; sequence KAHSHAVRMIQRGTQKSIIIHTSEDGKVQVTRPDQARMDIRLAKT. Residues 346–366 form a helical membrane-spanning segment; the sequence is LVLILVVLIICWGPLLAIMVY. Topologically, residues 367–378 are extracellular; sequence DVFGKMNKLIKT. A helical membrane pass occupies residues 379–400; sequence VFAFCSMLCLLNSTVNPIIYAL. Residues 401–473 lie on the Cytoplasmic side of the membrane; that stretch reads RSKDLRHAFR…VSTDTSAEAL (73 aa). The S-palmitoyl cysteine moiety is linked to residue Cys416. Ser426 and Ser430 each carry phosphoserine.

This sequence belongs to the G-protein coupled receptor 1 family. In terms of assembly, interacts (via C-terminus) with CNRIP1. Associates with G protein alpha subunits, including G(i) alpha-1/GNAI1, G(i) alpha-3/GNAI3 and G(o)-alpha/GNAO1; palmitoylation is important for interaction with GNAI3 and GNAO1. Post-translationally, palmitoylation at Cys-416 is important for recruitment at both plasma membrane and lipid rafts and association with G protein alpha subunits. Expressed in the brain, in the striatum, medial septum, descending arm of the band of Broca, the amygdaloid nucleus, the hippocampus and cortex (at protein level). High levels in the lateral striatum. In rostral brain regions, high expression levels in the dorsal lateral striatum, while in the caudal brain regions, high levels are observed in the ventral lateral striatum. Expressed in monocytes/macrophages (at protein level). Expressed in striated muscles and in vascular smooth muscles cells (at protein level).

The protein localises to the cell membrane. Its subcellular location is the mitochondrion outer membrane. It localises to the cell projection. It is found in the axon. The protein resides in the presynapse. Hemopressin, a peptide derived from hemoglobin subunit alpha (HBA1 and/or HBA2), acts as an antagonist peptide: hemopressin-binding efficiently blocks cannabinoid receptor CNR1 and subsequent signaling. Its function is as follows. G-protein coupled receptor for cannabinoids, including endocannabinoids (eCBs), such as N-arachidonoylethanolamide (also called anandamide or AEA) and 2-arachidonoylglycerol (2-AG). Mediates many cannabinoid-induced effects, acting, among others, on food intake, memory loss, gastrointestinal motility, catalepsy, ambulatory activity, anxiety, chronic pain. Signaling typically involves reduction in cyclic AMP. In the hypothalamus, may have a dual effect on mitochondrial respiration depending upon the agonist dose and possibly upon the cell type. Increases respiration at low doses, while decreases respiration at high doses. At high doses, CNR1 signal transduction involves G-protein alpha-i protein activation and subsequent inhibition of mitochondrial soluble adenylate cyclase, decrease in cyclic AMP concentration, inhibition of protein kinase A (PKA)-dependent phosphorylation of specific subunits of the mitochondrial electron transport system, including NDUFS2. In the hypothalamus, inhibits leptin-induced reactive oxygen species (ROS) formation and mediates cannabinoid-induced increase in SREBF1 and FASN gene expression. In response to cannabinoids, drives the release of orexigenic beta-endorphin, but not that of melanocyte-stimulating hormone alpha/alpha-MSH, from hypothalamic POMC neurons, hence promoting food intake. In the hippocampus, regulates cellular respiration and energy production in response to cannabinoids. Involved in cannabinoid-dependent depolarization-induced suppression of inhibition (DSI), a process in which depolarization of CA1 postsynaptic pyramidal neurons mobilizes eCBs, which retrogradely activate presynaptic CB1 receptors, transiently decreasing GABAergic inhibitory neurotransmission. Also reduces excitatory synaptic transmission. In superior cervical ganglions and cerebral vascular smooth muscle cells, inhibits voltage-gated Ca(2+) channels in a constitutive, as well as agonist-dependent manner. Induces leptin production in adipocytes and reduces LRP2-mediated leptin clearance in the kidney, hence participating in hyperleptinemia. In adipose tissue, CNR1 signaling leads to increased expression of SREBF1, ACACA and FASN genes. In the liver, activation by endocannabinoids leads to increased de novo lipogenesis and reduced fatty acid catabolism, associated with increased expression of SREBF1/SREBP-1, GCK, ACACA, ACACB and FASN genes. May also affect de novo cholesterol synthesis and HDL-cholesteryl ether uptake. Peripherally modulates energy metabolism. In high carbohydrate diet-induced obesity, may decrease the expression of mitochondrial dihydrolipoyl dehydrogenase/DLD in striated muscles, as well as that of selected glucose/ pyruvate metabolic enzymes, hence affecting energy expenditure through mitochondrial metabolism. In response to cannabinoid anandamide, elicits a pro-inflammatory response in macrophages, which involves NLRP3 inflammasome activation and IL1B and IL18 secretion. In macrophages infiltrating pancreatic islets, this process may participate in the progression of type-2 diabetes and associated loss of pancreatic beta-cells. In Rattus norvegicus (Rat), this protein is Cannabinoid receptor 1 (Cnr1).